The chain runs to 801 residues: Cadherin-20 (801 aa).

An N-terminal signal peptide occupies residues 1–34 (MWTTGRMSNAKSWLGLGTSLYFWALMDLATTVLS). The propeptide occupies 35-59 (STPMPEVELDTLFSGKPQSHQRSRR). Residues 60–619 (SWVWNQFFVL…AYMLPVSLSR (560 aa)) lie on the Extracellular side of the membrane. Cadherin domains lie at 61 to 165 (WVWN…EPKF), 166 to 274 (LDGP…PPRF), 275 to 389 (PQKH…PPVF), 390 to 494 (EPRF…APEF), and 494 to 610 (FPRF…SPEA). An N-linked (GlcNAc...) asparagine glycan is attached at asparagine 261. Residues asparagine 420, asparagine 461, and asparagine 542 are each glycosylated (N-linked (GlcNAc...) asparagine). A helical transmembrane segment spans residues 620–640 (GALIAILACVFVLLVLVLLIL). At 641 to 801 (SMRRHRKQPY…GASEGPSPLW (161 aa)) the chain is on the cytoplasmic side.

The protein localises to the cell membrane. In terms of biological role, cadherins are calcium-dependent cell adhesion proteins. They preferentially interact with themselves in a homophilic manner in connecting cells; cadherins may thus contribute to the sorting of heterogeneous cell types. This Rattus norvegicus (Rat) protein is Cadherin-20 (Cdh20).